Consider the following 354-residue polypeptide: Ferredoxin--NADP reductase 2 (354 aa).

Residues threonine 14, aspartate 33, glutamine 41, tyrosine 46, alanine 86, phenylalanine 121, aspartate 289, and threonine 330 each coordinate FAD.

The protein belongs to the ferredoxin--NADP reductase type 2 family. Homodimer. FAD serves as cofactor.

It carries out the reaction 2 reduced [2Fe-2S]-[ferredoxin] + NADP(+) + H(+) = 2 oxidized [2Fe-2S]-[ferredoxin] + NADPH. The protein is Ferredoxin--NADP reductase 2 of Christiangramia forsetii (strain DSM 17595 / CGMCC 1.15422 / KT0803) (Gramella forsetii).